We begin with the raw amino-acid sequence, 303 residues long: Deoxyhypusine hydroxylase (303 aa).

HEAT-like PBS-type repeat units lie at residues 56–82 (LKHE…VLQD) and 89–115 (VRHE…YAQD). 3 residues coordinate Fe cation: His58, His91, and Glu92. Positions 139 to 158 (DSPDTNPYLSVDPAPPAEEK) are disordered. HEAT-like PBS-type repeat units lie at residues 176–202 (HRYR…GLQI), 207–233 (FRHE…ALER), and 240–266 (VRHE…HVGD). Residues His209, His242, and Glu243 each contribute to the Fe cation site.

It belongs to the deoxyhypusine hydroxylase family. The cofactor is Fe(2+).

It carries out the reaction [eIF5A protein]-deoxyhypusine + AH2 + O2 = [eIF5A protein]-hypusine + A + H2O. The protein operates within protein modification; eIF5A hypusination. In terms of biological role, catalyzes the hydroxylation of the N(6)-(4-aminobutyl)-L-lysine intermediate produced by deoxyhypusine synthase/DHPS on a critical lysine of the eukaryotic translation initiation factor 5A/eIF-5A. This is the second step of the post-translational modification of that lysine into an unusual amino acid residue named hypusine. Hypusination is unique to mature eIF-5A factor and is essential for its function. This chain is Deoxyhypusine hydroxylase (dohh), found in Xenopus laevis (African clawed frog).